The sequence spans 253 residues: 5-oxoprolinase subunit A (253 aa).

Belongs to the LamB/PxpA family. In terms of assembly, forms a complex composed of PxpA, PxpB and PxpC.

The enzyme catalyses 5-oxo-L-proline + ATP + 2 H2O = L-glutamate + ADP + phosphate + H(+). Its function is as follows. Catalyzes the cleavage of 5-oxoproline to form L-glutamate coupled to the hydrolysis of ATP to ADP and inorganic phosphate. The polypeptide is 5-oxoprolinase subunit A (Bacillus thuringiensis subsp. konkukian (strain 97-27)).